A 143-amino-acid polypeptide reads, in one-letter code: Transcriptional regulator MraZ (143 aa).

2 SpoVT-AbrB domains span residues 5-47 (EFDH…TLEE) and 76-119 (AVEV…DRET).

The protein belongs to the MraZ family. As to quaternary structure, forms oligomers.

It is found in the cytoplasm. The protein resides in the nucleoid. The chain is Transcriptional regulator MraZ from Staphylococcus epidermidis (strain ATCC 35984 / DSM 28319 / BCRC 17069 / CCUG 31568 / BM 3577 / RP62A).